The sequence spans 41 residues: Photosystem I reaction center subunit IX (41 aa).

A helical membrane pass occupies residues 7 to 27 (YLSTAPVVALIWFTFTAGLLI).

This sequence belongs to the PsaJ family.

The protein resides in the plastid. It is found in the chloroplast thylakoid membrane. In terms of biological role, may help in the organization of the PsaE and PsaF subunits. The polypeptide is Photosystem I reaction center subunit IX (Pleurastrum terricola (Filamentous green alga)).